Here is a 259-residue protein sequence, read N- to C-terminus: Glutathione S-transferase domain-containing protein DDB_G0274705 (259 aa).

Residues 7–96 (KIDYIFYTNN…YLAQKFNTFL (90 aa)) form the GST N-terminal domain. Positions 102–232 (NPLENSEVIT…GFKNFNPSLL (131 aa)) constitute a GST C-terminal domain.

It belongs to the GST superfamily.

In Dictyostelium discoideum (Social amoeba), this protein is Glutathione S-transferase domain-containing protein DDB_G0274705.